We begin with the raw amino-acid sequence, 236 residues long: Phosphoribosylaminoimidazole-succinocarboxamide synthase (236 aa).

The protein belongs to the SAICAR synthetase family.

It carries out the reaction 5-amino-1-(5-phospho-D-ribosyl)imidazole-4-carboxylate + L-aspartate + ATP = (2S)-2-[5-amino-1-(5-phospho-beta-D-ribosyl)imidazole-4-carboxamido]succinate + ADP + phosphate + 2 H(+). Its pathway is purine metabolism; IMP biosynthesis via de novo pathway; 5-amino-1-(5-phospho-D-ribosyl)imidazole-4-carboxamide from 5-amino-1-(5-phospho-D-ribosyl)imidazole-4-carboxylate: step 1/2. The sequence is that of Phosphoribosylaminoimidazole-succinocarboxamide synthase (purC) from Lactococcus lactis subsp. lactis (strain IL1403) (Streptococcus lactis).